The sequence spans 434 residues: Attachment protein G3P (434 aa).

The first 19 residues, 1–19, serve as a signal peptide directing secretion; the sequence is MKRKIIAISLFLYIPLSNA. The segment at 19 to 88 is N1; the sequence is ADNWESITKS…LTFSGIWPDS (70 aa). A disulfide bridge connects residues Cys-63 and Cys-98. Residues 89–107 form a G1 (Gly-rich linker) region; it reads QFRLVTGDTCVYNGSPSEK. The disordered stretch occupies residues 118–137; it reads EGDMQRSVPDEEPSEQTPEE. A compositionally biased stretch (acidic residues) spans 127-137; the sequence is DEEPSEQTPEE. The segment at 132–200 is N2; it reads EQTPEEICEA…PTGYVPESGE (69 aa). 2 disulfide bridges follow: Cys-139–Cys-167 and Cys-177–Cys-184. 2 disordered regions span residues 191-260 and 272-311; these read PTGY…TGKS and DASP…SVSD. Residues 193 to 206 show a composition bias toward low complexity; sequence GYVPESGESSSSPV. Over residues 211–257 the composition is skewed to gly residues; the sequence is TGGTGEGGSDTGGDTGGGDTGGGSTGGDTGGSTGGGSTGGGSTGGST. The interval 252-434 is CT; it reads STGGSTGKSL…ATSLLRKGEQ (183 aa). Basic and acidic residues predominate over residues 293–302; it reads DNQKKADEQS. Residues 408-429 traverse the membrane as a helical segment; it reads VLSWVMYCLTFWYVFQSATSLL.

This sequence belongs to the inovirus G3P protein family. Interacts with G6P; this interaction is required for proper integration of G3P and G6P into the virion. Interacts with G8P. Interacts with the tip of the host pilus. Interacts (via N-terminus) with host TolA.

The protein resides in the virion. It localises to the host membrane. Its function is as follows. Plays essential roles both in the penetration of the viral genome into the bacterial host via pilus retraction and in the extrusion process. During the initial step of infection, G3P mediates adsorption of the phage to its primary receptor, the tip of host I-pilus. Attachment of the phage causes pilus retraction bringing the viral particle into close proximity of the host cell inner membrane. Subsequent interaction with the host entry receptor tolA induces penetration of the viral DNA into the host cytoplasm. In the extrusion process, G3P mediates the release of the membrane-anchored virion from the cell via its C-terminal domain. This Escherichia coli (Bacteriophage I2-2) protein is Attachment protein G3P (III).